The primary structure comprises 689 residues: Polyribonucleotide nucleotidyltransferase (689 aa).

Mg(2+)-binding residues include D482 and D488. The 60-residue stretch at 549 to 608 (PRMITLTIPQNKIGELIGPGGKNIRKIQEDNNVKIDIEETGRVFISGVESDGVKSAKEYV) folds into the KH domain. Positions 618–686 (GKIYKSRVTK…KQGRINLSIK (69 aa)) constitute an S1 motif domain.

This sequence belongs to the polyribonucleotide nucleotidyltransferase family. Mg(2+) serves as cofactor.

It is found in the cytoplasm. The catalysed reaction is RNA(n+1) + phosphate = RNA(n) + a ribonucleoside 5'-diphosphate. In terms of biological role, involved in mRNA degradation. Catalyzes the phosphorolysis of single-stranded polyribonucleotides processively in the 3'- to 5'-direction. The sequence is that of Polyribonucleotide nucleotidyltransferase from Endomicrobium trichonymphae.